We begin with the raw amino-acid sequence, 395 residues long: Multidrug resistance protein MdtL (395 aa).

12 consecutive transmembrane segments (helical) span residues 4-24 (FLLCSFALVLLYPAGIDMYLV), 42-62 (IAFSVYLAGMATAMLFAGKIA), 69-89 (PVAIVGALVFMMASLLCSRAS), 93-113 (LFLSGRFLQGVGAGGCYVVAF), 131-151 (LLNGITCIVPVLAPVVGHLIM), 158-178 (SLFYTMSAMGIIVGLLSLFIL), 217-237 (VSVILTFVNASPVLLMEVMGF), 247-267 (ALTAGVSMVVSFSTPFALGLF), 271-291 (TLMLVSQGLFLTAGVTLSLAH), 295-315 (VTLFGLTLICAGFSVGFGVAM), 328-350 (VASSTLGIAQVCGSSLWIWLAAI), and 355-377 (AMNMLIGILIGCSIVSILLIFSV).

The protein belongs to the major facilitator superfamily. DHA1 family. MdtL (TC 2.A.1.2.22) subfamily.

Its subcellular location is the cell inner membrane. The chain is Multidrug resistance protein MdtL from Salmonella newport (strain SL254).